A 280-amino-acid chain; its full sequence is 2-dehydro-3-deoxyphosphooctonate aldolase (280 aa).

The protein belongs to the KdsA family.

The protein localises to the cytoplasm. The enzyme catalyses D-arabinose 5-phosphate + phosphoenolpyruvate + H2O = 3-deoxy-alpha-D-manno-2-octulosonate-8-phosphate + phosphate. Its pathway is carbohydrate biosynthesis; 3-deoxy-D-manno-octulosonate biosynthesis; 3-deoxy-D-manno-octulosonate from D-ribulose 5-phosphate: step 2/3. It functions in the pathway bacterial outer membrane biogenesis; lipopolysaccharide biosynthesis. This is 2-dehydro-3-deoxyphosphooctonate aldolase from Neisseria meningitidis serogroup C / serotype 2a (strain ATCC 700532 / DSM 15464 / FAM18).